Consider the following 256-residue polypeptide: tRNA pseudouridine synthase A (256 aa).

Aspartate 43 serves as the catalytic Nucleophile. Tyrosine 94 contributes to the substrate binding site.

Belongs to the tRNA pseudouridine synthase TruA family.

It carries out the reaction uridine(38/39/40) in tRNA = pseudouridine(38/39/40) in tRNA. Its function is as follows. Formation of pseudouridine at positions 38, 39 and 40 in the anticodon stem and loop of transfer RNAs. This chain is tRNA pseudouridine synthase A, found in Pyrobaculum aerophilum (strain ATCC 51768 / DSM 7523 / JCM 9630 / CIP 104966 / NBRC 100827 / IM2).